The chain runs to 566 residues: Putative ABC transporter ATP-binding protein BA_2641/GBAA_2641/BAS2461 (566 aa).

2 ABC transporter domains span residues 5-246 (ISFE…GLRE) and 300-533 (LKVE…ANLK). Residues 39–46 (GRSGSGKS) and 333–340 (GHNGAGKS) each bind ATP.

It belongs to the ABC transporter superfamily.

Its subcellular location is the cell membrane. Its function is as follows. Probably part of an ABC transporter complex. Responsible for energy coupling to the transport system. The chain is Putative ABC transporter ATP-binding protein BA_2641/GBAA_2641/BAS2461 from Bacillus anthracis.